Here is a 397-residue protein sequence, read N- to C-terminus: Enoyl-[acyl-carrier-protein] reductase [NADH] (397 aa).

NAD(+) contacts are provided by residues 48–53 (GASTGY), 74–75 (FE), 111–112 (DA), and 139–140 (AA). Y225 contacts substrate. Catalysis depends on Y235, which acts as the Proton donor. NAD(+) contacts are provided by residues K244 and 273–275 (VVT).

This sequence belongs to the TER reductase family. As to quaternary structure, monomer.

The enzyme catalyses a 2,3-saturated acyl-[ACP] + NAD(+) = a (2E)-enoyl-[ACP] + NADH + H(+). The protein operates within lipid metabolism; fatty acid biosynthesis. In terms of biological role, involved in the final reduction of the elongation cycle of fatty acid synthesis (FAS II). Catalyzes the reduction of a carbon-carbon double bond in an enoyl moiety that is covalently linked to an acyl carrier protein (ACP). The protein is Enoyl-[acyl-carrier-protein] reductase [NADH] of Burkholderia pseudomallei (strain 1710b).